A 212-amino-acid chain; its full sequence is 7-carboxy-7-deazaguanine synthase (212 aa).

Substrate is bound by residues 22–24 and arginine 37; that span reads LQG. The Radical SAM core domain maps to 28 to 212; that stretch reads NTGMPAVFVR…VQTHKWAGIE (185 aa). 3 residues coordinate [4Fe-4S] cluster: cysteine 41, cysteine 45, and cysteine 48. Threonine 50 is a Mg(2+) binding site. Position 78 (threonine 78) interacts with substrate. Residues glycine 80 and 122–124 contribute to the S-adenosyl-L-methionine site; that span reads SPK.

Belongs to the radical SAM superfamily. 7-carboxy-7-deazaguanine synthase family. As to quaternary structure, homodimer. [4Fe-4S] cluster is required as a cofactor. It depends on S-adenosyl-L-methionine as a cofactor. Mg(2+) serves as cofactor.

It carries out the reaction 6-carboxy-5,6,7,8-tetrahydropterin + H(+) = 7-carboxy-7-deazaguanine + NH4(+). Its pathway is purine metabolism; 7-cyano-7-deazaguanine biosynthesis. In terms of biological role, catalyzes the complex heterocyclic radical-mediated conversion of 6-carboxy-5,6,7,8-tetrahydropterin (CPH4) to 7-carboxy-7-deazaguanine (CDG), a step common to the biosynthetic pathways of all 7-deazapurine-containing compounds. In Neisseria meningitidis serogroup B (strain ATCC BAA-335 / MC58), this protein is 7-carboxy-7-deazaguanine synthase.